The chain runs to 31 residues: Kappa-theraphotoxin-Ps1b (31 aa).

3 cysteine pairs are disulfide-bonded: Cys-2-Cys-16, Cys-9-Cys-21, and Cys-15-Cys-25. Met-31 carries the methionine amide modification.

The protein belongs to the neurotoxin 30 (phrixotoxin) family. In terms of tissue distribution, expressed by the venom gland.

It localises to the secreted. Its function is as follows. Potent and specific blocker of Kv4.2/KCND2 (IC(50)=34 nM) and Kv4.3/KCND3 (IC(50)=71 nM) potassium channels. Acts by altering the gating properties of these channels. The sequence is that of Kappa-theraphotoxin-Ps1b from Paraphysa scrofa (Chilean copper tarantula).